The primary structure comprises 456 residues: Bifunctional protein GlmU (456 aa).

Residues 1–229 (MLNNAMSVVI…LSEVEGVNNR (229 aa)) form a pyrophosphorylase region. Residues 11–14 (LAAG), lysine 25, glutamine 76, 81–82 (GT), 103–105 (YGD), glycine 140, glutamate 154, asparagine 169, and asparagine 227 contribute to the UDP-N-acetyl-alpha-D-glucosamine site. Aspartate 105 serves as a coordination point for Mg(2+). Asparagine 227 is a binding site for Mg(2+). Residues 230–250 (LQLSRLERVYQSEQAEKLLLA) form a linker region. Residues 251 to 456 (GVMLRDPARF…EGWRRPVKKK (206 aa)) form an N-acetyltransferase region. Arginine 333 and lysine 351 together coordinate UDP-N-acetyl-alpha-D-glucosamine. Histidine 363 (proton acceptor) is an active-site residue. Positions 366 and 377 each coordinate UDP-N-acetyl-alpha-D-glucosamine. Acetyl-CoA-binding positions include alanine 380, 386–387 (NY), serine 405, alanine 423, and arginine 440.

In the N-terminal section; belongs to the N-acetylglucosamine-1-phosphate uridyltransferase family. This sequence in the C-terminal section; belongs to the transferase hexapeptide repeat family. Homotrimer. It depends on Mg(2+) as a cofactor.

The protein localises to the cytoplasm. It carries out the reaction alpha-D-glucosamine 1-phosphate + acetyl-CoA = N-acetyl-alpha-D-glucosamine 1-phosphate + CoA + H(+). The enzyme catalyses N-acetyl-alpha-D-glucosamine 1-phosphate + UTP + H(+) = UDP-N-acetyl-alpha-D-glucosamine + diphosphate. The protein operates within nucleotide-sugar biosynthesis; UDP-N-acetyl-alpha-D-glucosamine biosynthesis; N-acetyl-alpha-D-glucosamine 1-phosphate from alpha-D-glucosamine 6-phosphate (route II): step 2/2. It functions in the pathway nucleotide-sugar biosynthesis; UDP-N-acetyl-alpha-D-glucosamine biosynthesis; UDP-N-acetyl-alpha-D-glucosamine from N-acetyl-alpha-D-glucosamine 1-phosphate: step 1/1. It participates in bacterial outer membrane biogenesis; LPS lipid A biosynthesis. Catalyzes the last two sequential reactions in the de novo biosynthetic pathway for UDP-N-acetylglucosamine (UDP-GlcNAc). The C-terminal domain catalyzes the transfer of acetyl group from acetyl coenzyme A to glucosamine-1-phosphate (GlcN-1-P) to produce N-acetylglucosamine-1-phosphate (GlcNAc-1-P), which is converted into UDP-GlcNAc by the transfer of uridine 5-monophosphate (from uridine 5-triphosphate), a reaction catalyzed by the N-terminal domain. This Escherichia coli O157:H7 (strain EC4115 / EHEC) protein is Bifunctional protein GlmU.